The primary structure comprises 209 residues: Uridine kinase (209 aa).

12–19 (GGTGSGKS) contacts ATP.

The protein belongs to the uridine kinase family.

The protein localises to the cytoplasm. The enzyme catalyses uridine + ATP = UMP + ADP + H(+). It carries out the reaction cytidine + ATP = CMP + ADP + H(+). The protein operates within pyrimidine metabolism; CTP biosynthesis via salvage pathway; CTP from cytidine: step 1/3. It functions in the pathway pyrimidine metabolism; UMP biosynthesis via salvage pathway; UMP from uridine: step 1/1. This is Uridine kinase from Clostridium tetani (strain Massachusetts / E88).